The chain runs to 96 residues: Cytochrome c2 iso-2 (96 aa).

Heme c contacts are provided by cysteine 10, cysteine 13, histidine 14, and methionine 75.

This sequence belongs to the cytochrome c family. Binds 1 heme c group covalently per subunit.

In terms of biological role, cytochrome c2 is found mainly in purple, non-sulfur, photosynthetic bacteria where it functions as the electron donor to the oxidized bacteriochlorophyll in the photophosphorylation pathway. However, it may also have a role in the respiratory chain and is found in some non-photosynthetic bacteria. This chain is Cytochrome c2 iso-2, found in Magnetospirillum fulvum (Rhodospirillum fulvum).